A 714-amino-acid chain; its full sequence is Fatty acid oxidation complex subunit alpha (714 aa).

Residues 1–190 (MEMASAFTLN…KLGLVDDVVP (190 aa)) form an enoyl-CoA hydratase region. Residues 306–714 (APLNSVGILG…FWKTTATDLQ (409 aa)) form a 3-hydroxyacyl-CoA dehydrogenase region.

In the N-terminal section; belongs to the enoyl-CoA hydratase/isomerase family. It in the central section; belongs to the 3-hydroxyacyl-CoA dehydrogenase family. Heterotetramer of two alpha chains (FadJ) and two beta chains (FadI).

It localises to the cytoplasm. It catalyses the reaction a (3S)-3-hydroxyacyl-CoA = a (2E)-enoyl-CoA + H2O. It carries out the reaction a 4-saturated-(3S)-3-hydroxyacyl-CoA = a (3E)-enoyl-CoA + H2O. The enzyme catalyses a (3S)-3-hydroxyacyl-CoA + NAD(+) = a 3-oxoacyl-CoA + NADH + H(+). The catalysed reaction is (3S)-3-hydroxybutanoyl-CoA = (3R)-3-hydroxybutanoyl-CoA. It functions in the pathway lipid metabolism; fatty acid beta-oxidation. Its function is as follows. Catalyzes the formation of a hydroxyacyl-CoA by addition of water on enoyl-CoA. Also exhibits 3-hydroxyacyl-CoA epimerase and 3-hydroxyacyl-CoA dehydrogenase activities. In Shigella boydii serotype 4 (strain Sb227), this protein is Fatty acid oxidation complex subunit alpha.